The sequence spans 354 residues: 3-dehydroquinate synthase (354 aa).

NAD(+)-binding positions include 100-104, 124-125, Lys-136, Lys-145, and 163-166; these read GATGD, TT, and FLKT. 3 residues coordinate Zn(2+): Glu-178, His-242, and His-256.

The protein belongs to the sugar phosphate cyclases superfamily. Dehydroquinate synthase family. NAD(+) serves as cofactor. It depends on Co(2+) as a cofactor. Requires Zn(2+) as cofactor.

The protein resides in the cytoplasm. The catalysed reaction is 7-phospho-2-dehydro-3-deoxy-D-arabino-heptonate = 3-dehydroquinate + phosphate. It functions in the pathway metabolic intermediate biosynthesis; chorismate biosynthesis; chorismate from D-erythrose 4-phosphate and phosphoenolpyruvate: step 2/7. Catalyzes the conversion of 3-deoxy-D-arabino-heptulosonate 7-phosphate (DAHP) to dehydroquinate (DHQ). In Staphylococcus aureus (strain Mu50 / ATCC 700699), this protein is 3-dehydroquinate synthase.